A 657-amino-acid polypeptide reads, in one-letter code: Sodium/glucose cotransporter 4 (657 aa).

Residues Met-1–Glu-24 lie on the Extracellular side of the membrane. A helical transmembrane segment spans residues Ala-25–Ser-45. The Cytoplasmic portion of the chain corresponds to Ser-46–Gly-79. The helical transmembrane segment at Ser-80–Phe-100 threads the bilayer. The Extracellular portion of the chain corresponds to Glu-101–Ala-104. The chain crosses the membrane as a helical span at residues Ala-105–Val-125. At Thr-126 to Leu-147 the chain is on the cytoplasmic side. Residues Ser-148–Ile-168 traverse the membrane as a helical segment. The Extracellular segment spans residues Gln-169 to Thr-180. A helical membrane pass occupies residues Val-181 to Tyr-201. Residues Thr-202–Thr-207 are Cytoplasmic-facing. Residues Val-208–Tyr-228 traverse the membrane as a helical segment. The Extracellular segment spans residues Glu-229–Thr-265. Asn-246 carries an N-linked (GlcNAc...) asparagine glycan. A helical membrane pass occupies residues Gly-266–Cys-286. Residues Thr-287–Gly-307 are Cytoplasmic-facing. Residues Ser-308 to Ile-328 traverse the membrane as a helical segment. The Extracellular portion of the chain corresponds to Ser-329–Arg-373. The helical transmembrane segment at Gly-374 to Ser-396 threads the bilayer. Topologically, residues Thr-397–Met-417 are cytoplasmic. Residues Val-418–Ile-438 form a helical membrane-spanning segment. Residues Gln-439–Gln-451 lie on the Extracellular side of the membrane. A helical membrane pass occupies residues Ala-452–Gly-472. Topologically, residues Arg-473–Gly-478 are cytoplasmic. The chain crosses the membrane as a helical span at residues Ala-479 to Val-499. At Tyr-500–Tyr-520 the chain is on the extracellular side. A helical membrane pass occupies residues Leu-521–Cys-541. At Thr-542–Thr-636 the chain is on the cytoplasmic side. A helical membrane pass occupies residues Val-637–Ala-657.

It belongs to the sodium:solute symporter (SSF) (TC 2.A.21) family.

It is found in the membrane. Probable sodium-dependent sugar transporter. This Danio rerio (Zebrafish) protein is Sodium/glucose cotransporter 4 (slc5a9).